Reading from the N-terminus, the 307-residue chain is Nitrogenase iron protein 2 (307 aa).

13-20 (GKGGIGKS) is an ATP binding site. [4Fe-4S] cluster is bound at residue C101. R104 carries the ADP-ribosylarginine; by dinitrogenase reductase ADP-ribosyltransferase modification. [4Fe-4S] cluster is bound at residue C135. Positions 285–307 (QLTETDKAAKESEKKQEDAEGEA) are disordered.

It belongs to the NifH/BchL/ChlL family. As to quaternary structure, homodimer. The cofactor is [4Fe-4S] cluster. The reversible ADP-ribosylation of Arg-104 inactivates the nitrogenase reductase and regulates nitrogenase activity.

The catalysed reaction is N2 + 8 reduced [2Fe-2S]-[ferredoxin] + 16 ATP + 16 H2O = H2 + 8 oxidized [2Fe-2S]-[ferredoxin] + 2 NH4(+) + 16 ADP + 16 phosphate + 6 H(+). The key enzymatic reactions in nitrogen fixation are catalyzed by the nitrogenase complex, which has 2 components: the iron protein and the molybdenum-iron protein. This chain is Nitrogenase iron protein 2 (nifH2), found in Mastigocladus laminosus (Fischerella sp.).